The chain runs to 71 residues: UPF0346 protein MGAS2096_Spy0401 (71 aa).

This sequence belongs to the UPF0346 family.

The chain is UPF0346 protein MGAS2096_Spy0401 from Streptococcus pyogenes serotype M12 (strain MGAS2096).